The sequence spans 500 residues: Cytochrome P450 2D27 (500 aa).

Heme is bound at residue cysteine 446.

It belongs to the cytochrome P450 family. The cofactor is heme. As to expression, expressed in liver, but not in kidney, small intestine, and brain.

It localises to the endoplasmic reticulum membrane. Its subcellular location is the microsome membrane. Functionally, has bufuralol 1'-hydroxylase and debrisoquine 4-hydroxylase activities. The polypeptide is Cytochrome P450 2D27 (CYP2D27) (Mesocricetus auratus (Golden hamster)).